A 521-amino-acid polypeptide reads, in one-letter code: Probable feruloyl esterase B-2 (521 aa).

The signal sequence occupies residues 1–19 (MKVSLWLTLLGVNLSLALA). N-linked (GlcNAc...) asparagine glycans are attached at residues N13, N53, N85, N98, and N138. Disulfide bonds link C28–C75 and C63–C114. 4 disulfide bridges follow: C187–C440, C257–C274, C283–C291, and C506–C520. S188 functions as the Acyl-ester intermediate in the catalytic mechanism. A glycan (N-linked (GlcNAc...) asparagine) is linked at N235. Residues D258, D261, V263, D265, and I267 each coordinate Ca(2+). The Charge relay system role is filled by D399. A glycan (N-linked (GlcNAc...) asparagine) is linked at N419. Residue H439 is the Charge relay system of the active site.

This sequence belongs to the tannase family.

The protein resides in the secreted. The enzyme catalyses feruloyl-polysaccharide + H2O = ferulate + polysaccharide.. In terms of biological role, involved in degradation of plant cell walls. Hydrolyzes the feruloyl-arabinose ester bond in arabinoxylans as well as the feruloyl-galactose and feruloyl-arabinose ester bonds in pectin. In Aspergillus flavus (strain ATCC 200026 / FGSC A1120 / IAM 13836 / NRRL 3357 / JCM 12722 / SRRC 167), this protein is Probable feruloyl esterase B-2 (faeB-2).